The sequence spans 85 residues: Putative membrane protein insertion efficiency factor (85 aa).

It belongs to the UPF0161 family.

Its subcellular location is the cell membrane. Could be involved in insertion of integral membrane proteins into the membrane. The protein is Putative membrane protein insertion efficiency factor of Buchnera aphidicola subsp. Schizaphis graminum (strain Sg).